Consider the following 687-residue polypeptide: Follicle-stimulating hormone receptor (687 aa).

The first 17 residues, 1–17 (MALLLVSLLAFLSLGSG), serve as a signal peptide directing secretion. Residues 18–46 (CHHQVCHYSNRVFLCQESKVTEIPSDLPR) form the LRRNT domain. Residues 18 to 358 (CHHQVCHYSN…EDIMGYDILR (341 aa)) are Extracellular-facing. A disulfide bond links cysteine 23 and cysteine 32. 9 LRR repeats span residues 49–72 (LELR…FGDL), 73–97 (KKIE…LPKL), 98–118 (HEIR…AFQN), 119–143 (LPNL…KIQS), 144–169 (LQKV…MGLS), 170–192 (FESM…AFNG), 193–216 (TQLD…VFQG), 217–240 (ASGP…GLEN), and 241–259 (LKKL…PSLE). Residues asparagine 191 and asparagine 199 are each glycosylated (N-linked (GlcNAc...) asparagine). 4 disulfide bridges follow: cysteine 275/cysteine 338, cysteine 276/cysteine 292, cysteine 276/cysteine 348, and cysteine 292/cysteine 330. Asparagine 293 carries an N-linked (GlcNAc...) asparagine glycan. Tyrosine 327 bears the Sulfotyrosine mark. Residues 359-379 (VLIWFISILAITGNIIVLVIL) form a helical membrane-spanning segment. At 380-390 (ITSQYKLTVPR) the chain is on the cytoplasmic side. The helical transmembrane segment at 391-413 (FLMCNLAFADLCIGIYLLLIASV) threads the bilayer. The Extracellular portion of the chain corresponds to 414-435 (DIHTKSQYHNYAIDWQTGAGCD). A disulfide bond links cysteine 434 and cysteine 509. The helical transmembrane segment at 436–457 (AAGFFTVFGSELSVYTLTAITL) threads the bilayer. Over 458–477 (ERWHTITHAMQLECKVQLRH) the chain is Cytoplasmic. A helical membrane pass occupies residues 478-500 (AASVMLVGWIFGFGVGLLPIFGI). At 501–520 (STYMKVSICLPMDIDSPLSQ) the chain is on the extracellular side. Residues 521–542 (LYVMSLLVLNVLAFVVICGCYT) form a helical membrane-spanning segment. Residues 543-565 (HIYLTVRNPNIVSSSSDTKIAKR) are Cytoplasmic-facing. A helical membrane pass occupies residues 566–589 (MGILIFTDFLCMAPISFFGISASL). Over 590-600 (KVALITVSKSK) the chain is Extracellular. The chain crosses the membrane as a helical span at residues 601–622 (ILLVLFYPINSCANPFLYAIFT). Topologically, residues 623-687 (KNFRRDFFIL…LVPLSHLAQN (65 aa)) are cytoplasmic.

Belongs to the G-protein coupled receptor 1 family. FSH/LSH/TSH subfamily. Homotrimer. Functions as a homotrimer binding the FSH hormone heterodimer composed of CGA and FSHB. Interacts with ARRB2. Interacts with APPL2; interaction is independent of follicle stimulating hormone stimulation. Post-translationally, N-glycosylated; indirectly required for FSH-binding, possibly via a conformational change that allows high affinity binding of hormone. Sulfated.

The protein resides in the cell membrane. G protein-coupled receptor for follitropin, the follicle-stimulating hormone. Through cAMP production activates the downstream PI3K-AKT and ERK1/ERK2 signaling pathways. This chain is Follicle-stimulating hormone receptor (FSHR), found in Equus asinus (Donkey).